Here is a 238-residue protein sequence, read N- to C-terminus: Ribonuclease PH (238 aa).

Residues Arg86 and 124–126 contribute to the phosphate site; that span reads GTR.

This sequence belongs to the RNase PH family. In terms of assembly, homohexameric ring arranged as a trimer of dimers.

It catalyses the reaction tRNA(n+1) + phosphate = tRNA(n) + a ribonucleoside 5'-diphosphate. In terms of biological role, phosphorolytic 3'-5' exoribonuclease that plays an important role in tRNA 3'-end maturation. Removes nucleotide residues following the 3'-CCA terminus of tRNAs; can also add nucleotides to the ends of RNA molecules by using nucleoside diphosphates as substrates, but this may not be physiologically important. Probably plays a role in initiation of 16S rRNA degradation (leading to ribosome degradation) during starvation. This chain is Ribonuclease PH, found in Actinobacillus succinogenes (strain ATCC 55618 / DSM 22257 / CCUG 43843 / 130Z).